The primary structure comprises 348 residues: MSQKARPTFYRQELNKTIWEVPERYQNLSPVGSGAYGSVMSAFDGKAGLRVAVKKLSRPFQSIIHAKRTYRELRLLKHMKHENVIGLLDVFSPATSLEGFNDVYLVTHLMGADLNNIVKCQKLTDDHVQFLIYQILRALKYIHSADIIHRDLKPSNLAVNEDCELKILDFGLARLTDDEMTGYVATRWYRAPEIMLNWMHYNMTVDIWSVGCIMAELLTGRTLFPGTDHINQLQQIMRLTGTPPASLISRMPSHEARNYISSLPHMPKRNFADVFIGANPLAVDLLEKMLVLDTDKRITASQALAHPYFAQYHDPDDEPEADPYDQSFESRDLEIEEWKSKIYIQNRN.

The Protein kinase domain occupies 25-309 (YQNLSPVGSG…ASQALAHPYF (285 aa)). ATP is bound by residues 31 to 39 (VGSGAYGSV) and Lys-54. Catalysis depends on Asp-169, which acts as the Proton acceptor. Thr-181 carries the post-translational modification Phosphothreonine; by MAP2K3. Positions 181 to 183 (TGY) match the TXY motif. Phosphotyrosine; by MAP2K3 is present on Tyr-183.

The protein belongs to the protein kinase superfamily. CMGC Ser/Thr protein kinase family. MAP kinase subfamily. The cofactor is Mg(2+). In terms of processing, dually phosphorylated on Thr-181 and Tyr-183, which activates the enzyme.

It localises to the cytoplasm. It is found in the nucleus. It catalyses the reaction L-seryl-[protein] + ATP = O-phospho-L-seryl-[protein] + ADP + H(+). It carries out the reaction L-threonyl-[protein] + ATP = O-phospho-L-threonyl-[protein] + ADP + H(+). Its activity is regulated as follows. Activated by threonine and tyrosine phosphorylation by the dual specificity kinase, MKK3. Serine/threonine kinase which acts as an essential component of the MAP kinase signal transduction pathway. Mapk14b is one of the four p38 MAPKs which play an important role in the cascades of cellular responses evoked by extracellular stimuli such as pro-inflammatory cytokines or physical stress leading to direct activation of transcription factors. Accordingly, p38 MAPKs phosphorylate a broad range of proteins and it has been estimated that they may have approximately 200 to 300 substrates each. Some of the targets are downstream kinases which are activated through phosphorylation and further phosphorylate additional targets. This chain is Mitogen-activated protein kinase 14B (mapk14b), found in Danio rerio (Zebrafish).